The following is a 262-amino-acid chain: 2-keto-4-pentenoate hydratase (262 aa).

The protein belongs to the hydratase/decarboxylase family. MhpD subfamily. A divalent metal cation serves as cofactor.

The enzyme catalyses (S)-4-hydroxy-2-oxopentanoate = (2Z)-2-hydroxypenta-2,4-dienoate + H2O. It participates in aromatic compound metabolism; 3-phenylpropanoate degradation. In terms of biological role, catalyzes the conversion of 2-hydroxypentadienoic acid (enolic form of 2-oxopent-4-enoate) to 4-hydroxy-2-ketopentanoic acid. This chain is 2-keto-4-pentenoate hydratase, found in Burkholderia vietnamiensis (strain G4 / LMG 22486) (Burkholderia cepacia (strain R1808)).